Reading from the N-terminus, the 201-residue chain is Protein GrpE (201 aa).

Positions 1-32 are disordered; sequence MTDRDRQPEDTTAPTGEPVVSKPYIMPDDPEP.

Belongs to the GrpE family. Homodimer.

It localises to the cytoplasm. In terms of biological role, participates actively in the response to hyperosmotic and heat shock by preventing the aggregation of stress-denatured proteins, in association with DnaK and GrpE. It is the nucleotide exchange factor for DnaK and may function as a thermosensor. Unfolded proteins bind initially to DnaJ; upon interaction with the DnaJ-bound protein, DnaK hydrolyzes its bound ATP, resulting in the formation of a stable complex. GrpE releases ADP from DnaK; ATP binding to DnaK triggers the release of the substrate protein, thus completing the reaction cycle. Several rounds of ATP-dependent interactions between DnaJ, DnaK and GrpE are required for fully efficient folding. The protein is Protein GrpE of Bradyrhizobium diazoefficiens (strain JCM 10833 / BCRC 13528 / IAM 13628 / NBRC 14792 / USDA 110).